Reading from the N-terminus, the 199-residue chain is uncharacterized protein (199 aa).

This sequence to U.parvum UU376.

This is an uncharacterized protein from Ureaplasma parvum serovar 3 (strain ATCC 700970).